The chain runs to 573 residues: Proline--tRNA ligase (573 aa).

This sequence belongs to the class-II aminoacyl-tRNA synthetase family. ProS type 1 subfamily. In terms of assembly, homodimer.

It is found in the cytoplasm. The catalysed reaction is tRNA(Pro) + L-proline + ATP = L-prolyl-tRNA(Pro) + AMP + diphosphate. Functionally, catalyzes the attachment of proline to tRNA(Pro) in a two-step reaction: proline is first activated by ATP to form Pro-AMP and then transferred to the acceptor end of tRNA(Pro). As ProRS can inadvertently accommodate and process non-cognate amino acids such as alanine and cysteine, to avoid such errors it has two additional distinct editing activities against alanine. One activity is designated as 'pretransfer' editing and involves the tRNA(Pro)-independent hydrolysis of activated Ala-AMP. The other activity is designated 'posttransfer' editing and involves deacylation of mischarged Ala-tRNA(Pro). The misacylated Cys-tRNA(Pro) is not edited by ProRS. The protein is Proline--tRNA ligase of Elusimicrobium minutum (strain Pei191).